The primary structure comprises 201 residues: Lipopolysaccharide core heptose(II)-phosphate phosphatase (201 aa).

The first 35 residues, 1–35 (MLAFTLRFIKNKRYLATLAGALVIIAGLTSQHAWS), serve as a signal peptide directing secretion.

The protein belongs to the phosphoglycerate mutase family. Ais subfamily.

The protein resides in the periplasm. The protein operates within bacterial outer membrane biogenesis; lipopolysaccharide metabolism. Catalyzes the dephosphorylation of heptose(II) of the outer membrane lipopolysaccharide core. The chain is Lipopolysaccharide core heptose(II)-phosphate phosphatase from Salmonella heidelberg (strain SL476).